A 159-amino-acid polypeptide reads, in one-letter code: Pathogenesis-related leaf protein 4 (159 aa).

A signal peptide spans 1–24 (MGLFNISLLLTCLMVLAIFHSCEA). Gln25 carries the pyrrolidone carboxylic acid modification. Positions 32 to 147 (LAVHNDARAQ…NGWWFISCNY (116 aa)) constitute an SCP domain. Intrachain disulfides connect Cys68–Cys136, Cys109–Cys115, and Cys131–Cys145.

It belongs to the CRISP family.

Functionally, probably involved in the defense reaction of plants against pathogens. This Solanum lycopersicum (Tomato) protein is Pathogenesis-related leaf protein 4.